Here is a 159-residue protein sequence, read N- to C-terminus: uncharacterized protein (159 aa).

Helical transmembrane passes span 17-37 (ALFISAVLGLFCGLSFFTILV) and 40-60 (LLQFVFFFVIGLLIEYIFKKY).

Its subcellular location is the cell membrane. This is an uncharacterized protein from Borreliella burgdorferi (strain ATCC 35210 / DSM 4680 / CIP 102532 / B31) (Borrelia burgdorferi).